A 237-amino-acid chain; its full sequence is Sugar fermentation stimulation protein homolog (237 aa).

Belongs to the SfsA family.

The polypeptide is Sugar fermentation stimulation protein homolog (Pseudomonas putida (strain ATCC 700007 / DSM 6899 / JCM 31910 / BCRC 17059 / LMG 24140 / F1)).